The primary structure comprises 75 residues: DNA-directed RNA polymerase subunit Rpo6 (75 aa).

Belongs to the archaeal Rpo6/eukaryotic RPB6 RNA polymerase subunit family. In terms of assembly, part of the RNA polymerase complex.

It is found in the cytoplasm. It catalyses the reaction RNA(n) + a ribonucleoside 5'-triphosphate = RNA(n+1) + diphosphate. DNA-dependent RNA polymerase (RNAP) catalyzes the transcription of DNA into RNA using the four ribonucleoside triphosphates as substrates. The protein is DNA-directed RNA polymerase subunit Rpo6 of Archaeoglobus fulgidus (strain ATCC 49558 / DSM 4304 / JCM 9628 / NBRC 100126 / VC-16).